We begin with the raw amino-acid sequence, 63 residues long: Protein DsrB (63 aa).

Belongs to the DsrB family.

This Yersinia pseudotuberculosis serotype O:1b (strain IP 31758) protein is Protein DsrB.